We begin with the raw amino-acid sequence, 473 residues long: Laccase-3 (473 aa).

The first 21 residues, 1 to 21 (MSFSSLRRALVFLGACSSALA), serve as a signal peptide directing secretion. Plastocyanin-like domains are found at residues 23–148 (IGPV…LVIY) and 160–298 (VDDE…ILRY). Residue Asn75 is glycosylated (N-linked (GlcNAc...) asparagine). 4 residues coordinate Cu cation: His85, His87, His130, and His132. 2 cysteine pairs are disulfide-bonded: Cys106/Cys462 and Cys138/Cys221. N-linked (GlcNAc...) asparagine glycans are attached at residues Asn226, Asn283, Asn309, Asn346, Asn350, and Asn374. The Plastocyanin-like 3 domain occupies 365–444 (TVPVLLQILN…AGLAIVFAED (80 aa)). Residues His410, His413, His415, His426, Cys427, His428, and His432 each coordinate Cu cation. Asn470 carries an N-linked (GlcNAc...) asparagine glycan.

This sequence belongs to the multicopper oxidase family. Homodimer. The cofactor is Cu cation.

The protein localises to the secreted. It carries out the reaction 4 hydroquinone + O2 = 4 benzosemiquinone + 2 H2O. Functionally, lignin degradation and detoxification of lignin-derived products. This is Laccase-3 (LCC3) from Trametes villosa (White-rot fungus).